The chain runs to 1042 residues: Starch synthase 3, chloroplastic/amyloplastic (1042 aa).

The N-terminal 44 residues, 1 to 44, are a transit peptide targeting the chloroplast; sequence MISYFLNQDFSRKKQGRMAASGPKSSGPRGFGRRTTVGSAQKRT. The tract at residues 1 to 63 is disordered; that stretch reads MISYFLNQDF…NATSTATNEV (63 aa). The span at 54 to 63 shows a compositional bias: polar residues; the sequence is NATSTATNEV. Residues 247–302 are a coiled coil; sequence ENFLLEEKLREQEKLAKEEAERERQKEEKRRIEAQKAAIEADRAQAKAETQKRREL. K608 lines the ADP-alpha-D-glucose pocket.

This sequence belongs to the glycosyltransferase 1 family. Bacterial/plant glycogen synthase subfamily. In terms of tissue distribution, expressed in leaves and flowers.

The protein resides in the plastid. It is found in the chloroplast. It localises to the amyloplast. The catalysed reaction is [(1-&gt;4)-alpha-D-glucosyl](n) + ADP-alpha-D-glucose = [(1-&gt;4)-alpha-D-glucosyl](n+1) + ADP + H(+). The protein operates within glycan biosynthesis; starch biosynthesis. In terms of biological role, involved in the synthesis of glycan chains within amylopectin in leaves. May play a regulatory role in the control of starch accumulation in plastids. The chain is Starch synthase 3, chloroplastic/amyloplastic (SS3) from Arabidopsis thaliana (Mouse-ear cress).